Reading from the N-terminus, the 342-residue chain is Ketol-acid reductoisomerase (NADP(+)) (342 aa).

A KARI N-terminal Rossmann domain is found at 2–181; it reads VKVYYNGDIK…GGARAGVLET (180 aa). Residues 25–28, Arg-48, Ser-52, and 82–85 contribute to the NADP(+) site; these read YGSQ and DEQQ. His-107 is a catalytic residue. Gly-133 serves as a coordination point for NADP(+). Positions 182–327 constitute a KARI C-terminal knotted domain; it reads TFKEETETDL…RQLREMMPFV (146 aa). Mg(2+) contacts are provided by Asp-190, Glu-194, Glu-226, and Glu-230. Ser-251 is a binding site for substrate.

This sequence belongs to the ketol-acid reductoisomerase family. Requires Mg(2+) as cofactor.

It carries out the reaction (2R)-2,3-dihydroxy-3-methylbutanoate + NADP(+) = (2S)-2-acetolactate + NADPH + H(+). The catalysed reaction is (2R,3R)-2,3-dihydroxy-3-methylpentanoate + NADP(+) = (S)-2-ethyl-2-hydroxy-3-oxobutanoate + NADPH + H(+). The protein operates within amino-acid biosynthesis; L-isoleucine biosynthesis; L-isoleucine from 2-oxobutanoate: step 2/4. Its pathway is amino-acid biosynthesis; L-valine biosynthesis; L-valine from pyruvate: step 2/4. Involved in the biosynthesis of branched-chain amino acids (BCAA). Catalyzes an alkyl-migration followed by a ketol-acid reduction of (S)-2-acetolactate (S2AL) to yield (R)-2,3-dihydroxy-isovalerate. In the isomerase reaction, S2AL is rearranged via a Mg-dependent methyl migration to produce 3-hydroxy-3-methyl-2-ketobutyrate (HMKB). In the reductase reaction, this 2-ketoacid undergoes a metal-dependent reduction by NADPH to yield (R)-2,3-dihydroxy-isovalerate. The polypeptide is Ketol-acid reductoisomerase (NADP(+)) (Bacillus velezensis (strain DSM 23117 / BGSC 10A6 / LMG 26770 / FZB42) (Bacillus amyloliquefaciens subsp. plantarum)).